The following is a 478-amino-acid chain: BTB/POZ domain-containing protein 17 (478 aa).

An N-terminal signal peptide occupies residues methionine 1–alanine 28. Residues asparagine 61, asparagine 100, asparagine 195, and asparagine 307 are each glycosylated (N-linked (GlcNAc...) asparagine). One can recognise a BTB domain in the interval serine 63–leucine 132. Residues alanine 169–glutamine 269 enclose the BACK domain.

It localises to the secreted. The sequence is that of BTB/POZ domain-containing protein 17 (Btbd17) from Mus musculus (Mouse).